The chain runs to 120 residues: Glycine cleavage system H protein (120 aa).

Residues 17-99 form the Lipoyl-binding domain; sequence VATVGITAHA…QGAGWLYRLK (83 aa). Residue lysine 58 is modified to N6-lipoyllysine.

The protein belongs to the GcvH family. The glycine cleavage system is composed of four proteins: P, T, L and H. (R)-lipoate is required as a cofactor.

Functionally, the glycine cleavage system catalyzes the degradation of glycine. The H protein shuttles the methylamine group of glycine from the P protein to the T protein. This Methylorubrum populi (strain ATCC BAA-705 / NCIMB 13946 / BJ001) (Methylobacterium populi) protein is Glycine cleavage system H protein.